A 1165-amino-acid polypeptide reads, in one-letter code: ATP-dependent helicase/deoxyribonuclease subunit B (1165 aa).

The 324-residue stretch at 1 to 324 (MRFIIGGAGS…LVEAQNRREE (324 aa)) folds into the UvrD-like helicase ATP-binding domain. 6 to 13 (GGAGSGKS) provides a ligand contact to ATP. The region spanning 282–597 (PLRFRGAPEL…IVGTVERSRH (316 aa)) is the UvrD-like helicase C-terminal domain. 4 residues coordinate [4Fe-4S] cluster: cysteine 803, cysteine 1121, cysteine 1124, and cysteine 1130.

Belongs to the helicase family. AddB/RexB type 1 subfamily. In terms of assembly, heterodimer of AddA and AddB. Mg(2+) is required as a cofactor. The cofactor is [4Fe-4S] cluster.

The heterodimer acts as both an ATP-dependent DNA helicase and an ATP-dependent, dual-direction single-stranded exonuclease. Recognizes the chi site generating a DNA molecule suitable for the initiation of homologous recombination. The AddB subunit has 5' -&gt; 3' nuclease activity but not helicase activity. The sequence is that of ATP-dependent helicase/deoxyribonuclease subunit B from Symbiobacterium thermophilum (strain DSM 24528 / JCM 14929 / IAM 14863 / T).